The primary structure comprises 1194 residues: Probable disease resistance protein RPP1 (1194 aa).

The interval Met-1–Arg-27 is disordered. The TIR domain occupies Trp-96–Leu-260. Position 105 to 110 (His-105 to Arg-110) interacts with NAD(+). Residue Glu-171 is part of the active site. Positions Asp-280–Thr-535 constitute an NB-ARC domain. 14 LRR repeats span residues Leu-623–Arg-647, Gln-658–Ser-681, Pro-690–Leu-713, Arg-714–Thr-737, Leu-739–Leu-760, Thr-761–Thr-784, Leu-786–Ala-807, Thr-808–Ile-831, Thr-832–Leu-855, Cys-866–Leu-878, Lys-879–Ser-899, Thr-900–Trp-922, Phe-943–Met-965, and Ser-966–Tyr-991. The interval Arg-1170–Asp-1194 is disordered. Residues Arg-1171 to Ser-1185 are compositionally biased toward low complexity.

The protein belongs to the disease resistance TIR-NB-LRR family.

It carries out the reaction NAD(+) + H2O = ADP-D-ribose + nicotinamide + H(+). In terms of biological role, TIR-NB-LRR receptor-like protein that confers resistance to the pathogen Hyaloperonospora arabidopsis. Probably acts as a NAD(+) hydrolase (NADase): in response to activation, catalyzes cleavage of NAD(+) into ADP-D-ribose (ADPR) and nicotinamide; NAD(+) cleavage triggering a defense system that promotes cell death. The sequence is that of Probable disease resistance protein RPP1 from Arabidopsis thaliana (Mouse-ear cress).